The following is a 282-amino-acid chain: MALKEYKPTSPARRHMTVADFAEITKAKPEKRLTKPVRKSGGRNAHGKVTTRHIGGGHKRRYRLIDWRRDKDGVPAKVAAIEYDPNRTARIALLHYLDGEKRYILAPVGVAVGDTLLSGADVDIRPGNALPVRTIPLGTVIHNVETAPGSGAKMIRTAGSFGQLMAKEGGYAQIRLPSGEVRKVLQDCKATIGQLGNVESSSVRVGKAGKSRWLGIRPTVRGLAMNPVDHPHGGGEGKSGQGNPHPVSPWGQKTKGLKTRNNRRTDKFIVTRRRPGVRNTQR.

Disordered regions lie at residues 31-54 and 223-282; these read KRLT…TRHI and LAMN…NTQR. Basic residues-rich tracts occupy residues 34–54 and 270–282; these read TKPV…TRHI and VTRR…NTQR.

Belongs to the universal ribosomal protein uL2 family. In terms of assembly, part of the 50S ribosomal subunit. Forms a bridge to the 30S subunit in the 70S ribosome.

Functionally, one of the primary rRNA binding proteins. Required for association of the 30S and 50S subunits to form the 70S ribosome, for tRNA binding and peptide bond formation. It has been suggested to have peptidyltransferase activity; this is somewhat controversial. Makes several contacts with the 16S rRNA in the 70S ribosome. This is Large ribosomal subunit protein uL2 from Anaeromyxobacter dehalogenans (strain 2CP-1 / ATCC BAA-258).